Here is a 613-residue protein sequence, read N- to C-terminus: Dihydroxy-acid dehydratase (613 aa).

Residue Asp81 coordinates Mg(2+). Residue Cys122 coordinates [2Fe-2S] cluster. Mg(2+) is bound by residues Asp123 and Lys124. An N6-carboxylysine modification is found at Lys124. Cys195 contributes to the [2Fe-2S] cluster binding site. Glu491 contributes to the Mg(2+) binding site. The Proton acceptor role is filled by Ser517.

The protein belongs to the IlvD/Edd family. Homodimer. The cofactor is [2Fe-2S] cluster. Mg(2+) is required as a cofactor.

It carries out the reaction (2R)-2,3-dihydroxy-3-methylbutanoate = 3-methyl-2-oxobutanoate + H2O. It catalyses the reaction (2R,3R)-2,3-dihydroxy-3-methylpentanoate = (S)-3-methyl-2-oxopentanoate + H2O. It functions in the pathway amino-acid biosynthesis; L-isoleucine biosynthesis; L-isoleucine from 2-oxobutanoate: step 3/4. Its pathway is amino-acid biosynthesis; L-valine biosynthesis; L-valine from pyruvate: step 3/4. Its function is as follows. Functions in the biosynthesis of branched-chain amino acids. Catalyzes the dehydration of (2R,3R)-2,3-dihydroxy-3-methylpentanoate (2,3-dihydroxy-3-methylvalerate) into 2-oxo-3-methylpentanoate (2-oxo-3-methylvalerate) and of (2R)-2,3-dihydroxy-3-methylbutanoate (2,3-dihydroxyisovalerate) into 2-oxo-3-methylbutanoate (2-oxoisovalerate), the penultimate precursor to L-isoleucine and L-valine, respectively. The polypeptide is Dihydroxy-acid dehydratase (Nitrobacter hamburgensis (strain DSM 10229 / NCIMB 13809 / X14)).